The primary structure comprises 190 residues: Lipocalin Can f 6.0101 (190 aa).

An N-terminal signal peptide occupies residues 1–15 (MKLLLLCLGLILVHA). Positions 43–54 (SDIKEKIEENGS) are igE-binding. N-linked (GlcNAc...) asparagine glycosylation is found at asparagine 52 and asparagine 67. An igE-binding region spans residues 76–83 (TKVNGKCT). An intrachain disulfide couples cysteine 82 to cysteine 175. Asparagine 90 is a glycosylation site (N-linked (GlcNAc...) asparagine). The interval 91-97 (KTEKDGE) is igE-binding. The tract at residues 100–109 (VVHDGYNLFR) is no IgE-binding. IgE-binding regions lie at residues 125 to 132 (NVNQEQEF) and 139 to 152 (GRKPDVSPKVKEKF).

Belongs to the calycin superfamily. Lipocalin family. As to quaternary structure, monomer. In terms of tissue distribution, expressed in saliva (at protein level). Expressed in dander (at protein level). According to PubMed:22104604, expressed in submaxillary gland. In contrast, according to PubMed:22515174, not expressed in submaxillary gland. Expressed in bladder and skin, but not in tongue.

The protein resides in the secreted. The sequence is that of Lipocalin Can f 6.0101 from Canis lupus familiaris (Dog).